The following is a 117-amino-acid chain: MKPYKSKINKIRSFALALIFIGFIVMYGGIFFKNSPILVLIFMTLGVLCIIGSTVVYAWIGLLSTRAIQVECPNCHKHTKVLGRVDMCMYCNEPLTLDPTLEGKEFDQSYNHKTKKS.

The next 2 helical transmembrane spans lie at 13-33 and 37-57; these read SFALALIFIGFIVMYGGIFFK and ILVLIFMTLGVLCIIGSTVVY.

The protein belongs to the UPF0295 family.

The protein localises to the cell membrane. The sequence is that of UPF0295 protein Bsph_0336 from Lysinibacillus sphaericus (strain C3-41).